The following is a 402-amino-acid chain: Speedy protein E2B (402 aa).

The disordered stretch occupies residues 1–89 (MDRTETRFRK…EEPEKELAPE (89 aa)). Polar residues predominate over residues 16-39 (GKITTSRQPHPQNEQSPQRSTSGY). Residues 76–89 (DESEEEPEKELAPE) show a composition bias toward acidic residues.

The protein belongs to the Speedy/Ringo family.

This is Speedy protein E2B (SPDYE2B) from Homo sapiens (Human).